Reading from the N-terminus, the 504-residue chain is Anaerobic nitric oxide reductase transcription regulator NorR (504 aa).

Asp-57 carries the post-translational modification 4-aspartylphosphate. The Sigma-54 factor interaction domain occupies Met-187–Val-416. Residues Gly-215 to Glu-222 and Ala-278 to Glu-287 contribute to the ATP site. The H-T-H motif DNA-binding region spans Trp-479 to Lys-498.

It participates in nitrogen metabolism; nitric oxide reduction. Functionally, required for the expression of anaerobic nitric oxide (NO) reductase, acts as a transcriptional activator for at least the norVW operon. Activation also requires sigma-54. This is Anaerobic nitric oxide reductase transcription regulator NorR from Escherichia coli O8 (strain IAI1).